A 553-amino-acid chain; its full sequence is Transcription factor IIIB 70 kDa subunit (553 aa).

The TFIIB-type zinc-finger motif lies at 6-39; the sequence is KQQKCKTCGHTQFDVNRYTAAGDVSCLRCGTVLE. Positions 10, 13, 31, and 34 each coordinate Zn(2+). 2 repeat units span residues 98–174 and 193–272. The interval 98–272 is interaction with TBP and with the Pol III subunit C34; the sequence is IAAALKIPDY…LQRRLNEFKK (175 aa). Residues 281–553 form an interaction with TBP region; it reads KSFREVENLE…KGLLGGNMGF (273 aa). Residues 473–523 are disordered; sequence KQEADELTGNTSKSSSGNRRKRNKSSLPAELRKELGDIDLDEDGTPRSAAD. The span at 480–489 shows a compositional bias: low complexity; sequence TGNTSKSSSG.

The protein belongs to the TFIIB family. As to quaternary structure, TFIIIB comprises the TATA-binding protein (TBP), the B-related factor (BRF) and a 70 kDa polypeptide.

It is found in the nucleus. General activator of RNA polymerase III transcription. Interacts with TBP. Binds to Pol III subunit C34 and to the TAU135 component of TFIIIC. The polypeptide is Transcription factor IIIB 70 kDa subunit (TDS4) (Candida albicans (strain SC5314 / ATCC MYA-2876) (Yeast)).